The following is a 273-amino-acid chain: Ribosomal RNA small subunit methyltransferase A (273 aa).

S-adenosyl-L-methionine contacts are provided by asparagine 18, leucine 20, glycine 45, glutamate 66, aspartate 91, and asparagine 113.

Belongs to the class I-like SAM-binding methyltransferase superfamily. rRNA adenine N(6)-methyltransferase family. RsmA subfamily.

Its subcellular location is the cytoplasm. It carries out the reaction adenosine(1518)/adenosine(1519) in 16S rRNA + 4 S-adenosyl-L-methionine = N(6)-dimethyladenosine(1518)/N(6)-dimethyladenosine(1519) in 16S rRNA + 4 S-adenosyl-L-homocysteine + 4 H(+). Specifically dimethylates two adjacent adenosines (A1518 and A1519) in the loop of a conserved hairpin near the 3'-end of 16S rRNA in the 30S particle. May play a critical role in biogenesis of 30S subunits. This Cronobacter sakazakii (strain ATCC BAA-894) (Enterobacter sakazakii) protein is Ribosomal RNA small subunit methyltransferase A.